The sequence spans 194 residues: Protein GrpE (194 aa).

Residues 1–24 show a composition bias toward basic and acidic residues; the sequence is MEEKDKEEKVTGENLEPEDKNLEQ. The tract at residues 1-41 is disordered; sequence MEEKDKEEKVTGENLEPEDKNLEQEDKEEVVGPQEEQQIDE.

The protein belongs to the GrpE family. In terms of assembly, homodimer.

It localises to the cytoplasm. In terms of biological role, participates actively in the response to hyperosmotic and heat shock by preventing the aggregation of stress-denatured proteins, in association with DnaK and GrpE. It is the nucleotide exchange factor for DnaK and may function as a thermosensor. Unfolded proteins bind initially to DnaJ; upon interaction with the DnaJ-bound protein, DnaK hydrolyzes its bound ATP, resulting in the formation of a stable complex. GrpE releases ADP from DnaK; ATP binding to DnaK triggers the release of the substrate protein, thus completing the reaction cycle. Several rounds of ATP-dependent interactions between DnaJ, DnaK and GrpE are required for fully efficient folding. The protein is Protein GrpE of Carboxydothermus hydrogenoformans (strain ATCC BAA-161 / DSM 6008 / Z-2901).